We begin with the raw amino-acid sequence, 129 residues long: Ribulose bisphosphate carboxylase small subunit (129 aa).

It belongs to the RuBisCO small chain family. As to quaternary structure, heterohexadecamer of 8 large and 8 small subunits.

In terms of biological role, ruBisCO catalyzes two reactions: the carboxylation of D-ribulose 1,5-bisphosphate, the primary event in carbon dioxide fixation, as well as the oxidative fragmentation of the pentose substrate. Both reactions occur simultaneously and in competition at the same active site. Although the small subunit is not catalytic it is essential for maximal activity. The sequence is that of Ribulose bisphosphate carboxylase small subunit from Cereibacter sphaeroides (Rhodobacter sphaeroides).